A 1198-amino-acid chain; its full sequence is Chromosome partition protein Smc (1198 aa).

Position 40–47 (40–47 (PNGSGKSN)) interacts with ATP. Coiled-coil stretches lie at residues 175–211 (ITKY…GQLG) and 322–524 (LGEQ…LAKK). The SMC hinge domain maps to 534-647 (CGTLADLLQV…VTDMEAATRV (114 aa)). Residues 687–1042 (SREIQELRQE…AELDKTMSER (356 aa)) adopt a coiled-coil conformation. The segment at 785-818 (AEEQSKLTDSIQEAQEALARQEEKNRQASREMEQ) is disordered. Residues 803–818 (ARQEEKNRQASREMEQ) are compositionally biased toward basic and acidic residues.

It belongs to the SMC family. In terms of assembly, homodimer.

The protein localises to the cytoplasm. Required for chromosome condensation and partitioning. The sequence is that of Chromosome partition protein Smc from Desulfitobacterium hafniense (strain Y51).